The following is a 160-amino-acid chain: MEKDDLTHFNDEKRAKMVDVTSKSETKRRAIARATIHMNEETLARIHAGKIAKGDVLAVAQVAGIMAAKKTSELIPMCHPIMTTKADISFEDDGKTALTITSEVVTVGKTGVEMEALTAVTIAALTIYDMCKAMDKGMRIEKTYLVEKTGGKSGTFKAEA.

Substrate contacts are provided by residues 77–79 and 114–115; these read MCH and ME. D129 is a catalytic residue.

It belongs to the MoaC family. Homohexamer; trimer of dimers.

The enzyme catalyses (8S)-3',8-cyclo-7,8-dihydroguanosine 5'-triphosphate = cyclic pyranopterin phosphate + diphosphate. Its pathway is cofactor biosynthesis; molybdopterin biosynthesis. Functionally, catalyzes the conversion of (8S)-3',8-cyclo-7,8-dihydroguanosine 5'-triphosphate to cyclic pyranopterin monophosphate (cPMP). In Listeria monocytogenes serotype 4b (strain F2365), this protein is Cyclic pyranopterin monophosphate synthase.